A 96-amino-acid chain; its full sequence is Large ribosomal subunit protein eL43 (96 aa).

4 residues coordinate Zn(2+): Cys-41, Cys-44, Cys-59, and Cys-62. Residues 41 to 62 (CPVCAFPKLKRAGTSIWVCEKC) form a C4-type zinc finger.

Belongs to the eukaryotic ribosomal protein eL43 family. Putative zinc-binding subfamily. Part of the 50S ribosomal subunit. The cofactor is Zn(2+).

In terms of biological role, binds to the 23S rRNA. The polypeptide is Large ribosomal subunit protein eL43 (Methanococcus maripaludis (strain DSM 14266 / JCM 13030 / NBRC 101832 / S2 / LL)).